Consider the following 485-residue polypeptide: Sulfate adenylyltransferase subunit 1 (485 aa).

The region spanning 17 to 232 (KDLLRLLTAG…LETVHIDNDH (216 aa)) is the tr-type G domain. The G1 stretch occupies residues 26-33 (GSVDDGKS). 26-33 (GSVDDGKS) lines the GTP pocket. A G2 region spans residues 84–88 (GITID). The tract at residues 105–108 (DTPG) is G3. Residues 105–109 (DTPGH) and 160–163 (NKMD) contribute to the GTP site. Residues 160–163 (NKMD) are G4. Residues 197–199 (SAL) form a G5 region.

It belongs to the TRAFAC class translation factor GTPase superfamily. Classic translation factor GTPase family. CysN/NodQ subfamily. Heterodimer composed of CysD, the smaller subunit, and CysN.

The catalysed reaction is sulfate + ATP + H(+) = adenosine 5'-phosphosulfate + diphosphate. It functions in the pathway sulfur metabolism; hydrogen sulfide biosynthesis; sulfite from sulfate: step 1/3. In terms of biological role, with CysD forms the ATP sulfurylase (ATPS) that catalyzes the adenylation of sulfate producing adenosine 5'-phosphosulfate (APS) and diphosphate, the first enzymatic step in sulfur assimilation pathway. APS synthesis involves the formation of a high-energy phosphoric-sulfuric acid anhydride bond driven by GTP hydrolysis by CysN coupled to ATP hydrolysis by CysD. This is Sulfate adenylyltransferase subunit 1 from Bacteroides thetaiotaomicron (strain ATCC 29148 / DSM 2079 / JCM 5827 / CCUG 10774 / NCTC 10582 / VPI-5482 / E50).